The chain runs to 474 residues: Protein IFIT1 homolog B (474 aa).

10 TPR repeats span residues 52-85 (VGIH…IQKE), 95-128 (LVTW…CKKF), 141-174 (VDCE…NPEN), 182-216 (AITV…NPDD), 218-250 (YIRV…ISSQ), 251-284 (AYVF…TPTS), 305-339 (ATNW…KRTF), 340-373 (EMAY…KIFE), 378-412 (QEIH…EKMS), and 437-470 (VESV…AADL).

The protein belongs to the IFIT family.

Functionally, IFIT1B is likely non-functional, lacking the critical antiviral role of IFIT1. Unlike IFIT1, which is essential in the innate immune response as part of an interferon-dependent multiprotein complex, IFIT1B does not prevent the translation of viral RNAs that lack host-specific 2'-O-methylation at their 5' cap. Consequently, it probably cannot inhibit their translation by competing with the host translation machinery. This is Protein IFIT1 homolog B from Homo sapiens (Human).